We begin with the raw amino-acid sequence, 3101 residues long: Probable polyketide synthase 32 (3101 aa).

A Ketosynthase family 3 (KS3) domain is found at 27-465 (SGDVAVIGIG…GSNVCLILSE (439 aa)). Catalysis depends on for beta-ketoacyl synthase activity residues Cys-199, His-338, and His-388. The tract at residues 664-697 (GVSADIIIGHSLGEVSSAYCSGMIDFETLCYLTY) is acyl/malonyl transferase. Ser-674 serves as the catalytic For acyl/malonyl transferase activity. Positions 965 to 1087 (GPSINNLGNN…GNFSLTKHNS (123 aa)) are N-terminal hotdog fold. In terms of domain architecture, PKS/mFAS DH spans 965-1287 (GPSINNLGNN…CTLVSLPNPE (323 aa)). His-999 acts as the Proton acceptor; for dehydratase activity in catalysis. Residues 1104–1287 (NFTSISKQDL…CTLVSLPNPE (184 aa)) are C-terminal hotdog fold. Asp-1176 acts as the Proton donor; for dehydratase activity in catalysis. Residues 1209-1236 (KNGNNNDDDEESNNNNNNNNNNNNNNNN) form a disordered region. The segment covering 1221 to 1236 (NNNNNNNNNNNNNNNN) has biased composition (low complexity). One can recognise a Carrier domain in the interval 2550 to 2627 (DNNEIIRSTI…QSIEIIKSAN (78 aa)). Ser-2587 carries the post-translational modification O-(pantetheine 4'-phosphoryl)serine. Residues 2627–2648 (NNKNNKNNNNNNNNKTNKNNNN) are disordered.

It depends on pantetheine 4'-phosphate as a cofactor.

Probable polyketide synthase. The polypeptide is Probable polyketide synthase 32 (pks32) (Dictyostelium discoideum (Social amoeba)).